Reading from the N-terminus, the 118-residue chain is Aspartate 1-decarboxylase (118 aa).

Ser-25 acts as the Schiff-base intermediate with substrate; via pyruvic acid in catalysis. At Ser-25 the chain carries Pyruvic acid (Ser). Thr-57 contributes to the substrate binding site. Tyr-58 functions as the Proton donor in the catalytic mechanism. 73–75 is a binding site for substrate; the sequence is GAA.

This sequence belongs to the PanD family. As to quaternary structure, heterooctamer of four alpha and four beta subunits. It depends on pyruvate as a cofactor. In terms of processing, is synthesized initially as an inactive proenzyme, which is activated by self-cleavage at a specific serine bond to produce a beta-subunit with a hydroxyl group at its C-terminus and an alpha-subunit with a pyruvoyl group at its N-terminus.

The protein resides in the cytoplasm. The enzyme catalyses L-aspartate + H(+) = beta-alanine + CO2. It functions in the pathway cofactor biosynthesis; (R)-pantothenate biosynthesis; beta-alanine from L-aspartate: step 1/1. Its function is as follows. Catalyzes the pyruvoyl-dependent decarboxylation of aspartate to produce beta-alanine. The chain is Aspartate 1-decarboxylase from Hyphomonas neptunium (strain ATCC 15444).